The chain runs to 551 residues: Probable NADH-ubiquinone oxidoreductase C947.15c, mitochondrial (551 aa).

The N-terminal 35 residues, 1-35, are a transit peptide targeting the mitochondrion; that stretch reads MSVSKARLQSVVRLSRTVPYSKTMVRSFHVSCAVK. 92-122 lines the FAD pocket; that stretch reads NIVVLGSGWGAVAAIKNLDPSLYNITLVSPR. Position 255 to 291 (255 to 291) interacts with NAD(+); sequence LHITVVGGGPTGMEFAAEMQDFIDNDVKDMFPELQKD.

This sequence belongs to the NADH dehydrogenase family.

The protein localises to the mitochondrion. It carries out the reaction a quinone + NADH + H(+) = a quinol + NAD(+). The enzyme catalyses a ubiquinone + NADH + H(+) = a ubiquinol + NAD(+). In terms of biological role, catalyzes the oxidation of NADH. This Schizosaccharomyces pombe (strain 972 / ATCC 24843) (Fission yeast) protein is Probable NADH-ubiquinone oxidoreductase C947.15c, mitochondrial.